The sequence spans 214 residues: Melanoregulin (214 aa).

The short motif at 162–172 (LSERYLLVVDR) is the Cholesterol-binding sequence motif element. Serine 213 is subject to Phosphoserine.

The protein belongs to the melanoregulin family. Identified in a complex with RILP and DCTN1; interacts directly with RILP, but does not interact directly with DCTN1. Interacts with PRPH2. Post-translationally, palmitoylated. Palmitoylation is required to maintain the protein at the melanosome membrane. Detected in melanocytes. Expressed in retina, in retinal pigment epithelium (at protein level). Widely expressed with higher expression in skin, heart, liver, testis and thymus. Detected in retina, in retinal pigment epithelium cells.

It localises to the apical cell membrane. The protein localises to the melanosome membrane. The protein resides in the lysosome membrane. Its subcellular location is the cytoplasmic vesicle membrane. In terms of biological role, probably functions as a cargo-recognition protein that couples cytoplasmic vesicles to the transport machinery. Plays a role in hair pigmentation, a process that involves shedding of melanosome-containing vesicles from melanocytes, followed by phagocytosis of the melanosome-containing vesicles by keratinocytes. Functions on melanosomes as receptor for RILP and the complex formed by RILP and DCTN1, and thereby contributes to retrograde melanosome transport from the cell periphery to the center. Overexpression causes accumulation of late endosomes and/or lysosomes at the microtubule organising center (MTOC) at the center of the cell. Probably binds cholesterol and requires the presence of cholesterol in membranes to function in microtubule-mediated retrograde organelle transport. Binds phosphatidylinositol 3-phosphate, phosphatidylinositol 4-phosphate, phosphatidylinositol 5-phosphate and phosphatidylinositol 3,5-bisphosphate, but not phosphatidylinositol 3,4-bisphosphate or phosphatidylinositol 4,5-bisphosphate. Required for normal phagosome clearing and normal activation of lysosomal enzymes in lysosomes from retinal pigment epithelium cells. Required for normal degradation of the lipofuscin component N-retinylidene-N-retinylethanolamine (A2E) in the eye. May function in membrane fusion and regulate the biogenesis of disk membranes of photoreceptor rod cells. The polypeptide is Melanoregulin (Mreg) (Mus musculus (Mouse)).